We begin with the raw amino-acid sequence, 202 residues long: Small ribosomal subunit protein uS4 (202 aa).

Residues 22–43 (TRKSARRAYPPGQHGQNRKKRS) are disordered. An S4 RNA-binding domain is found at 90–152 (MRLDNTVFRL…APSRKLVENN (63 aa)).

It belongs to the universal ribosomal protein uS4 family. Part of the 30S ribosomal subunit. Contacts protein S5. The interaction surface between S4 and S5 is involved in control of translational fidelity.

One of the primary rRNA binding proteins, it binds directly to 16S rRNA where it nucleates assembly of the body of the 30S subunit. Functionally, with S5 and S12 plays an important role in translational accuracy. The polypeptide is Small ribosomal subunit protein uS4 (Trichormus variabilis (strain ATCC 29413 / PCC 7937) (Anabaena variabilis)).